The primary structure comprises 864 residues: Leucine--tRNA ligase (864 aa).

Positions proline 42–histidine 52 match the 'HIGH' region motif. The 'KMSKS' region signature appears at lysine 624 to serine 628. Lysine 627 contributes to the ATP binding site.

This sequence belongs to the class-I aminoacyl-tRNA synthetase family.

The protein localises to the cytoplasm. It carries out the reaction tRNA(Leu) + L-leucine + ATP = L-leucyl-tRNA(Leu) + AMP + diphosphate. In Burkholderia ambifaria (strain ATCC BAA-244 / DSM 16087 / CCUG 44356 / LMG 19182 / AMMD) (Burkholderia cepacia (strain AMMD)), this protein is Leucine--tRNA ligase.